We begin with the raw amino-acid sequence, 471 residues long: UDP-N-acetylmuramoylalanine--D-glutamate ligase (471 aa).

122–128 (GSNAKST) provides a ligand contact to ATP.

The protein belongs to the MurCDEF family.

It localises to the cytoplasm. The enzyme catalyses UDP-N-acetyl-alpha-D-muramoyl-L-alanine + D-glutamate + ATP = UDP-N-acetyl-alpha-D-muramoyl-L-alanyl-D-glutamate + ADP + phosphate + H(+). The protein operates within cell wall biogenesis; peptidoglycan biosynthesis. Cell wall formation. Catalyzes the addition of glutamate to the nucleotide precursor UDP-N-acetylmuramoyl-L-alanine (UMA). The polypeptide is UDP-N-acetylmuramoylalanine--D-glutamate ligase (Psychrobacter cryohalolentis (strain ATCC BAA-1226 / DSM 17306 / VKM B-2378 / K5)).